Consider the following 213-residue polypeptide: Protein ras-1 (213 aa).

15–22 (GGGGVGKS) is a GTP binding site. The Effector region motif lies at 37 to 45 (YDPTIEDSY). GTP is bound by residues 62–66 (DTAGQ) and 121–124 (NKYD). At Cys210 the chain carries Cysteine methyl ester. Cys210 carries the S-farnesyl cysteine lipid modification. Positions 211-213 (IMM) are cleaved as a propeptide — removed in mature form.

Belongs to the small GTPase superfamily. Ras family.

It localises to the cell membrane. It carries out the reaction GTP + H2O = GDP + phosphate + H(+). Ras proteins bind GDP/GTP and possess intrinsic GTPase activity. This chain is Protein ras-1 (ras-1), found in Neurospora crassa (strain ATCC 24698 / 74-OR23-1A / CBS 708.71 / DSM 1257 / FGSC 987).